Here is an 80-residue protein sequence, read N- to C-terminus: Small ribosomal subunit protein bS18 (80 aa).

This sequence belongs to the bacterial ribosomal protein bS18 family. As to quaternary structure, part of the 30S ribosomal subunit. Forms a tight heterodimer with protein bS6.

Functionally, binds as a heterodimer with protein bS6 to the central domain of the 16S rRNA, where it helps stabilize the platform of the 30S subunit. This chain is Small ribosomal subunit protein bS18, found in Staphylococcus haemolyticus (strain JCSC1435).